Consider the following 181-residue polypeptide: Crossover junction endodeoxyribonuclease RuvC (181 aa).

Residues aspartate 7, glutamate 67, and aspartate 139 contribute to the active site. Positions 7, 67, and 139 each coordinate Mg(2+).

It belongs to the RuvC family. Homodimer which binds Holliday junction (HJ) DNA. The HJ becomes 2-fold symmetrical on binding to RuvC with unstacked arms; it has a different conformation from HJ DNA in complex with RuvA. In the full resolvosome a probable DNA-RuvA(4)-RuvB(12)-RuvC(2) complex forms which resolves the HJ. It depends on Mg(2+) as a cofactor.

It is found in the cytoplasm. The enzyme catalyses Endonucleolytic cleavage at a junction such as a reciprocal single-stranded crossover between two homologous DNA duplexes (Holliday junction).. Its function is as follows. The RuvA-RuvB-RuvC complex processes Holliday junction (HJ) DNA during genetic recombination and DNA repair. Endonuclease that resolves HJ intermediates. Cleaves cruciform DNA by making single-stranded nicks across the HJ at symmetrical positions within the homologous arms, yielding a 5'-phosphate and a 3'-hydroxyl group; requires a central core of homology in the junction. The consensus cleavage sequence is 5'-(A/T)TT(C/G)-3'. Cleavage occurs on the 3'-side of the TT dinucleotide at the point of strand exchange. HJ branch migration catalyzed by RuvA-RuvB allows RuvC to scan DNA until it finds its consensus sequence, where it cleaves and resolves the cruciform DNA. The protein is Crossover junction endodeoxyribonuclease RuvC of Ralstonia pickettii (strain 12J).